The following is a 277-amino-acid chain: Large ribosomal subunit protein uL2cz/uL2cy (277 aa).

2 disordered regions span residues methionine 1–lysine 31 and asparagine 227–lysine 277.

It belongs to the universal ribosomal protein uL2 family. In terms of assembly, part of the 50S ribosomal subunit.

It localises to the plastid. It is found in the chloroplast. The chain is Large ribosomal subunit protein uL2cz/uL2cy (rpl2-A) from Manihot esculenta (Cassava).